Reading from the N-terminus, the 199-residue chain is Pyridoxine/pyridoxamine 5'-phosphate oxidase (199 aa).

FMN is bound by residues 45 to 50 (RVVLLK), 60 to 61 (FT), R66, K67, and Q89. Residue K50 coordinates substrate. Residues Y107, R111, and S115 each coordinate substrate. FMN contacts are provided by residues 124–125 (QS) and W169. Residue 175 to 177 (RIH) coordinates substrate. R179 contributes to the FMN binding site.

It belongs to the pyridoxamine 5'-phosphate oxidase family. Homodimer. It depends on FMN as a cofactor.

The catalysed reaction is pyridoxamine 5'-phosphate + O2 + H2O = pyridoxal 5'-phosphate + H2O2 + NH4(+). It carries out the reaction pyridoxine 5'-phosphate + O2 = pyridoxal 5'-phosphate + H2O2. It functions in the pathway cofactor metabolism; pyridoxal 5'-phosphate salvage; pyridoxal 5'-phosphate from pyridoxamine 5'-phosphate: step 1/1. The protein operates within cofactor metabolism; pyridoxal 5'-phosphate salvage; pyridoxal 5'-phosphate from pyridoxine 5'-phosphate: step 1/1. In terms of biological role, catalyzes the oxidation of either pyridoxine 5'-phosphate (PNP) or pyridoxamine 5'-phosphate (PMP) into pyridoxal 5'-phosphate (PLP). The protein is Pyridoxine/pyridoxamine 5'-phosphate oxidase of Ehrlichia chaffeensis (strain ATCC CRL-10679 / Arkansas).